The following is a 223-amino-acid chain: Cytidylate kinase (223 aa).

ATP is bound at residue 17–25 (GPTASGKGT).

Belongs to the cytidylate kinase family. Type 1 subfamily.

The protein resides in the cytoplasm. It carries out the reaction CMP + ATP = CDP + ADP. It catalyses the reaction dCMP + ATP = dCDP + ADP. The sequence is that of Cytidylate kinase from Bordetella pertussis (strain Tohama I / ATCC BAA-589 / NCTC 13251).